The primary structure comprises 261 residues: Small ribosomal subunit protein mS23 (261 aa).

The segment at 233–261 is disordered; the sequence is RASSPSASWTNETEEEQKPIDQDVEEIQL.

This sequence belongs to the mitochondrion-specific ribosomal protein mS23 family. As to quaternary structure, component of the mitochondrial small ribosomal subunit.

It is found in the mitochondrion. The polypeptide is Small ribosomal subunit protein mS23 (RSM25) (Kluyveromyces lactis (strain ATCC 8585 / CBS 2359 / DSM 70799 / NBRC 1267 / NRRL Y-1140 / WM37) (Yeast)).